The sequence spans 828 residues: Periplasmic nitrate reductase (828 aa).

A signal peptide (tat-type signal) is located at residues 1 to 31 (MKLSRRSFMKANAVAAAAAAAGLSVPGVARA). Positions 39-95 (IKWDKAPCRFCGTGCGVLVGTQQGRVVACQGDPDAPVNRGLNCIKGYFLPKIMYGKD) constitute a 4Fe-4S Mo/W bis-MGD-type domain. [4Fe-4S] cluster-binding residues include Cys46, Cys49, Cys53, and Cys81. Mo-bis(molybdopterin guanine dinucleotide) is bound by residues Lys83, Gln150, Asn175, Cys179, 212–219 (WGSNMAEM), 243–247 (STFQH), 262–264 (QSD), Met372, Gln376, Asn482, 508–509 (SD), Lys531, Asp558, and 718–727 (TGRVLEHWHT). Phe794 is a substrate binding site. Mo-bis(molybdopterin guanine dinucleotide)-binding residues include Asn802 and Lys819.

It belongs to the prokaryotic molybdopterin-containing oxidoreductase family. NasA/NapA/NarB subfamily. As to quaternary structure, component of the periplasmic nitrate reductase NapAB complex composed of NapA and NapB. [4Fe-4S] cluster is required as a cofactor. Requires Mo-bis(molybdopterin guanine dinucleotide) as cofactor. Predicted to be exported by the Tat system. The position of the signal peptide cleavage has not been experimentally proven.

It is found in the periplasm. It carries out the reaction 2 Fe(II)-[cytochrome] + nitrate + 2 H(+) = 2 Fe(III)-[cytochrome] + nitrite + H2O. Its function is as follows. Catalytic subunit of the periplasmic nitrate reductase complex NapAB. Receives electrons from NapB and catalyzes the reduction of nitrate to nitrite. In Salmonella paratyphi A (strain ATCC 9150 / SARB42), this protein is Periplasmic nitrate reductase.